The following is a 261-amino-acid chain: Probable membrane transporter protein ORF9 (261 aa).

Helical transmembrane passes span 8-28, 29-49, 78-98, 100-120, 133-151, 152-171, 189-209, and 231-251; these read LLAF…IAGG, GGMI…QTLG, LPMA…ATIV, GDVL…YFGL, VTPF…FYDG, VFGP…LAGF, VGAF…GLLM, and IIKP…LADP.

The protein belongs to the 4-toluene sulfonate uptake permease (TSUP) (TC 2.A.102) family.

The protein resides in the cell membrane. This chain is Probable membrane transporter protein ORF9, found in Sinorhizobium sp.